The following is a 170-amino-acid chain: Cathelicidin antimicrobial peptide (170 aa).

The first 30 residues, 1–30 (MKTQRDGPSLGRWSLVLLLLGLVMPLAIVA), serve as a signal peptide directing secretion. The propeptide at 31-131 (QVLSYQEAVL…DISCDKDNRR (101 aa)) is cathelin-like domain (CLD). Intrachain disulfides connect C86-C97 and C108-C125. An active core region spans residues 150–162 (LKKIGQKIKDFLG).

It belongs to the cathelicidin family. In terms of assembly, monomer, homodimer or homotrimer (in vitro). Oligomerizes as tetra- or hexamer in solution (in vitro). In terms of processing, proteolytically cleaved by proteinase PRTN3 into antibacterial peptide LL-37. Proteolytically cleaved by cathepsin CTSG and neutrophil elastase ELANE. Post-translationally, resistant to proteolytic degradation in solution, and when bound to both zwitterionic (mimicking mammalian membranes) and negatively charged membranes (mimicking bacterial membranes). After secretion onto the skin surface, the CAMP gene product is processed by a serine protease-dependent mechanism into multiple novel antimicrobial peptides distinct from and shorter than cathelicidin LL-37. These peptides show enhanced antimicrobial action, acquiring the ability to kill skin pathogens such as S.aureus, E.coli and C.albicans. These peptides have lost the ability to stimulate CXCL8/IL8 release from keratinocytes. The peptides act synergistically, killing bacteria at lower concentrations when present together, and maintain activity at increased salt condition.

Its subcellular location is the secreted. The protein localises to the vesicle. Antimicrobial protein that is an integral component of the innate immune system. Binds to bacterial lipopolysaccharides (LPS). Acts via neutrophil N-formyl peptide receptors to enhance the release of CXCL2. Postsecretory processing generates multiple cathelicidin antimicrobial peptides with various lengths which act as a topical antimicrobial defense in sweat on skin. The unprocessed precursor form, cathelicidin antimicrobial peptide, inhibits the growth of Gram-negative E.coli and E.aerogenes with efficiencies comparable to that of the mature peptide LL-37 (in vitro). In terms of biological role, antimicrobial peptide that is an integral component of the innate immune system. Binds to bacterial lipopolysaccharides (LPS). Causes membrane permeabilization by forming transmembrane pores (in vitro). Causes lysis of E.coli. Exhibits antimicrobial activity against Gram-negative bacteria such as P.aeruginosa, S.typhimurium, E.aerogenes, E.coli and P.syringae, Gram-positive bacteria such as L.monocytogenes, S.epidermidis, S.pyogenes and S.aureus, as well as vancomycin-resistant enterococci (in vitro). Exhibits antimicrobial activity against methicillin-resistant S.aureus, P.mirabilis, and C.albicans in low-salt media, but not in media containing 100 mM NaCl (in vitro). Forms chiral supramolecular assemblies with quinolone signal (PQS) molecules of P.aeruginosa, which may lead to interference of bacterial quorum signaling and perturbance of bacterial biofilm formation. May form supramolecular fiber-like assemblies on bacterial membranes. Induces cytokine and chemokine producation as well as TNF/TNFA and CSF2/GMCSF production in normal human keratinocytes. Exhibits hemolytic activity against red blood cells. Functionally, exhibits antimicrobial activity against E.coli and B.megaterium (in vitro). This is Cathelicidin antimicrobial peptide from Chlorocebus aethiops (Green monkey).